The chain runs to 217 residues: Non-structural protein NS3 (217 aa).

The protein belongs to the orbivirus NS3 family.

Its function is as follows. May play a role in the release of virions from infected cells. The polypeptide is Non-structural protein NS3 (Segment-10) (African horse sickness virus 6 (AHSV-6)).